Consider the following 423-residue polypeptide: Imidazolonepropionase (423 aa).

Fe(3+)-binding residues include histidine 87 and histidine 89. Residues histidine 87 and histidine 89 each coordinate Zn(2+). 4-imidazolone-5-propanoate-binding residues include arginine 96, tyrosine 159, and histidine 192. Tyrosine 159 serves as a coordination point for N-formimidoyl-L-glutamate. Histidine 257 lines the Fe(3+) pocket. Histidine 257 serves as a coordination point for Zn(2+). Glutamate 260 provides a ligand contact to 4-imidazolone-5-propanoate. A Fe(3+)-binding site is contributed by aspartate 331. Residue aspartate 331 coordinates Zn(2+). The N-formimidoyl-L-glutamate site is built by asparagine 333 and glycine 335. Serine 336 serves as a coordination point for 4-imidazolone-5-propanoate.

The protein belongs to the metallo-dependent hydrolases superfamily. HutI family. Zn(2+) is required as a cofactor. Fe(3+) serves as cofactor.

It is found in the cytoplasm. The enzyme catalyses 4-imidazolone-5-propanoate + H2O = N-formimidoyl-L-glutamate. The protein operates within amino-acid degradation; L-histidine degradation into L-glutamate; N-formimidoyl-L-glutamate from L-histidine: step 3/3. Functionally, catalyzes the hydrolytic cleavage of the carbon-nitrogen bond in imidazolone-5-propanoate to yield N-formimidoyl-L-glutamate. It is the third step in the universal histidine degradation pathway. In Porphyromonas gingivalis (strain ATCC BAA-308 / W83), this protein is Imidazolonepropionase.